Reading from the N-terminus, the 47-residue chain is PhoP/PhoQ regulator MgrB (47 aa).

Residues W6–I26 form a helical membrane-spanning segment.

It belongs to the MgrB family. As to quaternary structure, may form homooligomers. Probably interacts with the periplasmic domain of PhoQ.

The protein localises to the cell inner membrane. Its function is as follows. PhoP-regulated transcription is redox-sensitive, being activated when the periplasm becomes more reducing. MgrB acts between DsbA/DsbB and PhoP/PhoQ in this pathway. Represses PhoP/PhoQ signaling, possibly by binding to the periplasmic domain of PhoQ, altering its activity and that of downstream effector PhoP. This Citrobacter koseri (strain ATCC BAA-895 / CDC 4225-83 / SGSC4696) protein is PhoP/PhoQ regulator MgrB.